Consider the following 62-residue polypeptide: Alpha-conotoxin-like Bn1.3 (62 aa).

An N-terminal signal peptide occupies residues 1-18 (MGMRMMFTVFLLVVLATA). The propeptide occupies 19 to 48 (VLPVTLDRASDGRNAAANAKTPRLIAPFIR). 2 disulfides stabilise this stretch: C51-C57 and C52-C61. At C61 the chain carries Cysteine amide.

Belongs to the conotoxin A superfamily. As to expression, expressed by the venom duct.

It localises to the secreted. Its function is as follows. Does not show activity on the acetylcholine receptors tested. In Conus bandanus (Banded marble cone), this protein is Alpha-conotoxin-like Bn1.3.